Here is a 439-residue protein sequence, read N- to C-terminus: Protein translocase subunit SecY (439 aa).

Transmembrane regions (helical) follow at residues 23–43 (IASV…PIPG), 77–97 (IFAL…LLTL), 125–145 (LVLA…ISGM), 154–174 (FYFY…LMWL), 187–207 (ISII…VHTI), 217–237 (ILLF…VVFI), 274–294 (VIPA…ISWF), 317–337 (YLIL…GLVF), 369–389 (IMIR…LIPE), and 397–417 (VPFY…MDFI).

The protein belongs to the SecY/SEC61-alpha family. As to quaternary structure, component of the Sec protein translocase complex. Heterotrimer consisting of SecY, SecE and SecG subunits. The heterotrimers can form oligomers, although 1 heterotrimer is thought to be able to translocate proteins. Interacts with the ribosome. Interacts with SecDF, and other proteins may be involved. Interacts with SecA.

Its subcellular location is the cell membrane. Functionally, the central subunit of the protein translocation channel SecYEG. Consists of two halves formed by TMs 1-5 and 6-10. These two domains form a lateral gate at the front which open onto the bilayer between TMs 2 and 7, and are clamped together by SecE at the back. The channel is closed by both a pore ring composed of hydrophobic SecY resides and a short helix (helix 2A) on the extracellular side of the membrane which forms a plug. The plug probably moves laterally to allow the channel to open. The ring and the pore may move independently. This is Protein translocase subunit SecY from Buchnera aphidicola subsp. Schizaphis graminum (strain Sg).